We begin with the raw amino-acid sequence, 257 residues long: tRNA (guanine-N(1)-)-methyltransferase (257 aa).

Residues Gly-117 and 137-142 (LGDFVL) contribute to the S-adenosyl-L-methionine site.

Belongs to the RNA methyltransferase TrmD family. Homodimer.

The protein localises to the cytoplasm. The enzyme catalyses guanosine(37) in tRNA + S-adenosyl-L-methionine = N(1)-methylguanosine(37) in tRNA + S-adenosyl-L-homocysteine + H(+). In terms of biological role, specifically methylates guanosine-37 in various tRNAs. In Bordetella pertussis (strain Tohama I / ATCC BAA-589 / NCTC 13251), this protein is tRNA (guanine-N(1)-)-methyltransferase.